A 123-amino-acid chain; its full sequence is Small ribosomal subunit protein uS12c (123 aa).

It belongs to the universal ribosomal protein uS12 family. As to quaternary structure, part of the 30S ribosomal subunit.

The protein localises to the plastid. It localises to the chloroplast. Functionally, with S4 and S5 plays an important role in translational accuracy. Located at the interface of the 30S and 50S subunits. This Anthoceros angustus (Hornwort) protein is Small ribosomal subunit protein uS12c (rps12).